Consider the following 207-residue polypeptide: 2,3-bisphosphoglycerate-dependent phosphoglycerate mutase (207 aa).

Substrate contacts are provided by residues 10–17 (RHGQSEWN), 23–24 (TG), Arg-62, 89–92 (ERDY), Lys-100, 116–117 (RR), and 160–161 (GN). His-11 acts as the Tele-phosphohistidine intermediate in catalysis. Residue Glu-89 is the Proton donor/acceptor of the active site.

The protein belongs to the phosphoglycerate mutase family. BPG-dependent PGAM subfamily. As to quaternary structure, homodimer.

The enzyme catalyses (2R)-2-phosphoglycerate = (2R)-3-phosphoglycerate. It functions in the pathway carbohydrate degradation; glycolysis; pyruvate from D-glyceraldehyde 3-phosphate: step 3/5. In terms of biological role, catalyzes the interconversion of 2-phosphoglycerate and 3-phosphoglycerate. In Bradyrhizobium sp. (strain BTAi1 / ATCC BAA-1182), this protein is 2,3-bisphosphoglycerate-dependent phosphoglycerate mutase.